Reading from the N-terminus, the 525-residue chain is Peptide chain release factor 3 (525 aa).

The region spanning 11–279 (DKRRTFAIIS…TYLEYAPQPA (269 aa)) is the tr-type G domain. GTP-binding positions include 20–27 (SHPDAGKT), 88–92 (DTPGH), and 142–145 (NKLD).

This sequence belongs to the TRAFAC class translation factor GTPase superfamily. Classic translation factor GTPase family. PrfC subfamily.

It is found in the cytoplasm. Functionally, increases the formation of ribosomal termination complexes and stimulates activities of RF-1 and RF-2. It binds guanine nucleotides and has strong preference for UGA stop codons. It may interact directly with the ribosome. The stimulation of RF-1 and RF-2 is significantly reduced by GTP and GDP, but not by GMP. The protein is Peptide chain release factor 3 of Levilactobacillus brevis (strain ATCC 367 / BCRC 12310 / CIP 105137 / JCM 1170 / LMG 11437 / NCIMB 947 / NCTC 947) (Lactobacillus brevis).